A 478-amino-acid chain; its full sequence is Isoeugenol monooxygenase (478 aa).

Fe cation-binding residues include H167, H218, H282, and H471.

It belongs to the carotenoid oxygenase family. As to quaternary structure, monomer. Requires Fe(2+) as cofactor.

It catalyses the reaction (E)-isoeugenol + O2 = vanillin + acetaldehyde. With respect to regulation, inhibited by HgCl(2), AgNO(3), CuCl(2), phenylhydrazine, 8-hydroxyquinoline, R-cycloserine and p-chloromercuribenzoic acid. In terms of biological role, involved in isoeugenol degradation. Catalyzes the oxidative cleavage of the side chain double-bond of isoeugenol to form vanillin and acetaldehyde. In Pseudomonas putida (Arthrobacter siderocapsulatus), this protein is Isoeugenol monooxygenase.